The primary structure comprises 1077 residues: Protein hairless (1077 aa).

Disordered regions lie at residues 14–75, 97–141, 269–322, 340–368, 408–504, 533–876, and 976–1077; these read NRQT…SNNN, SSTS…HAKT, PSAA…SRPR, TLGR…DQQP, IEKP…PKAK, TTTS…PTSN, and GQPA…LSKH. 4 stretches are compositionally biased toward low complexity: residues 26–75, 115–130, 269–286, and 293–308; these read NINS…SNNN, TTTP…SSST, PSAA…VTTA, and STSL…IQSS. 2 stretches are compositionally biased toward basic and acidic residues: residues 408–439 and 449–459; these read IEKP…ESKE and QPKDETVDVEM. Over residues 596-607 the composition is skewed to gly residues; that stretch reads GSGGASSGGAGG. Positions 640–684 are enriched in low complexity; it reads PGSSSSSTSPATLSTQPTRLNSSYSIHSLLGGSSGSGSSSFSSSG. A compositionally biased stretch (polar residues) spans 704–713; the sequence is SMYQPSSSSY. 4 positions are modified to phosphoserine: S720, S723, S746, and S753. The segment covering 772-782 has biased composition (polar residues); the sequence is PSTSGSASQDL. 2 stretches are compositionally biased toward low complexity: residues 783–798 and 811–829; these read SPPR…TPRT and ASPS…RSAS. Positions 837–846 are enriched in polar residues; the sequence is QQQPHLQRSS. Positions 865–876 are enriched in low complexity; the sequence is AGSPTSAPPTSN. Basic residues predominate over residues 984–995; it reads THPHLAHPHQHP. 2 stretches are compositionally biased toward low complexity: residues 996 to 1012 and 1023 to 1055; these read HPAA…LATP and SATS…SSSA. The segment covering 1056–1070 has biased composition (polar residues); that stretch reads MFHTSSLRNEQSSDL.

As to expression, during embryogenesis expression is primarily in endo- and mesodermal cell layers. Ovary, embryos, larval and pupal imaginal disks.

Its subcellular location is the nucleus. Functionally, is a potent antagonist of neurogenic gene activity during sensory organ development. The expression of distinct cell fates by the trichogen (shaft) / tormogen (socket) sister cell pair depends on the level of H activity. A certain threshold level of H activity is required, below which both sister cells adopt the tormogen fate. This chain is Protein hairless (H), found in Drosophila melanogaster (Fruit fly).